The primary structure comprises 662 residues: Acetyl-coenzyme A synthetase (662 aa).

CoA contacts are provided by residues 197-200 and Thr-317; that span reads RKGK. Residues 393-395, 417-422, Asp-510, and Arg-525 contribute to the ATP site; these read GEP and DTWWQT. Ser-533 provides a ligand contact to CoA. Arg-536 contributes to the ATP binding site. The Mg(2+) site is built by His-549 and Val-552. Lys-623 carries the post-translational modification N6-acetyllysine.

This sequence belongs to the ATP-dependent AMP-binding enzyme family. Mg(2+) serves as cofactor. Acetylated. Deacetylation by the SIR2-homolog deacetylase activates the enzyme.

It catalyses the reaction acetate + ATP + CoA = acetyl-CoA + AMP + diphosphate. Functionally, catalyzes the conversion of acetate into acetyl-CoA (AcCoA), an essential intermediate at the junction of anabolic and catabolic pathways. AcsA undergoes a two-step reaction. In the first half reaction, AcsA combines acetate with ATP to form acetyl-adenylate (AcAMP) intermediate. In the second half reaction, it can then transfer the acetyl group from AcAMP to the sulfhydryl group of CoA, forming the product AcCoA. The sequence is that of Acetyl-coenzyme A synthetase from Helicobacter pylori (strain P12).